The primary structure comprises 448 residues: N-succinylarginine dihydrolase (448 aa).

Substrate-binding positions include 19–28 (AGLSSGNIAS), Asn-110, and 137–138 (HR). Glu-174 is an active-site residue. Arg-216 lines the substrate pocket. Residue His-252 is part of the active site. Residues Asp-254 and Asn-366 each contribute to the substrate site. The active-site Nucleophile is Cys-372.

It belongs to the succinylarginine dihydrolase family. Homodimer.

The enzyme catalyses N(2)-succinyl-L-arginine + 2 H2O + 2 H(+) = N(2)-succinyl-L-ornithine + 2 NH4(+) + CO2. The protein operates within amino-acid degradation; L-arginine degradation via AST pathway; L-glutamate and succinate from L-arginine: step 2/5. In terms of biological role, catalyzes the hydrolysis of N(2)-succinylarginine into N(2)-succinylornithine, ammonia and CO(2). The sequence is that of N-succinylarginine dihydrolase from Legionella pneumophila (strain Paris).